A 428-amino-acid polypeptide reads, in one-letter code: 3-phosphoshikimate 1-carboxyvinyltransferase (428 aa).

Positions 22, 23, and 27 each coordinate 3-phosphoshikimate. Lys22 provides a ligand contact to phosphoenolpyruvate. Phosphoenolpyruvate-binding residues include Gly96 and Arg124. Ser169, Ser170, Gln171, Ser197, Asp313, Asn336, and Lys340 together coordinate 3-phosphoshikimate. Position 171 (Gln171) interacts with phosphoenolpyruvate. Asp313 acts as the Proton acceptor in catalysis. Positions 344, 386, and 411 each coordinate phosphoenolpyruvate.

This sequence belongs to the EPSP synthase family. As to quaternary structure, monomer.

The protein localises to the cytoplasm. It catalyses the reaction 3-phosphoshikimate + phosphoenolpyruvate = 5-O-(1-carboxyvinyl)-3-phosphoshikimate + phosphate. Its pathway is metabolic intermediate biosynthesis; chorismate biosynthesis; chorismate from D-erythrose 4-phosphate and phosphoenolpyruvate: step 6/7. Functionally, catalyzes the transfer of the enolpyruvyl moiety of phosphoenolpyruvate (PEP) to the 5-hydroxyl of shikimate-3-phosphate (S3P) to produce enolpyruvyl shikimate-3-phosphate and inorganic phosphate. The protein is 3-phosphoshikimate 1-carboxyvinyltransferase of Xenorhabdus nematophila (strain ATCC 19061 / DSM 3370 / CCUG 14189 / LMG 1036 / NCIMB 9965 / AN6).